Consider the following 486-residue polypeptide: tRNA (uracil-5-)-methyltransferase homolog B (486 aa).

3 residues coordinate S-adenosyl-L-methionine: glutamine 305, glutamate 355, and asparagine 405. Cysteine 433 acts as the Nucleophile in catalysis. Catalysis depends on glutamate 479, which acts as the Proton acceptor.

The protein belongs to the class I-like SAM-binding methyltransferase superfamily. RNA M5U methyltransferase family.

It localises to the mitochondrion matrix. It carries out the reaction uridine(54) in tRNA + S-adenosyl-L-methionine = 5-methyluridine(54) in tRNA + S-adenosyl-L-homocysteine + H(+). It catalyses the reaction a uridine in 12S rRNA + S-adenosyl-L-methionine = a 5-methyluridine in 12S rRNA + S-adenosyl-L-homocysteine + H(+). Functionally, mitochondrial S-adenosyl-L-methionine-dependent methyltransferase that catalyzes the formation of 5-methyl-uridine in tRNAs and 12S rRNA. Catalyzes the methylation of uridine at position 54 (m5U54) in all tRNAs. Specifically methylates the uridine in position 429 of 12S rRNA (m5U429). Does not affect RNA stability or mitochondrial translation. In Pongo abelii (Sumatran orangutan), this protein is tRNA (uracil-5-)-methyltransferase homolog B (TRMT2B).